The following is a 374-amino-acid chain: Glutamate 5-kinase (374 aa).

Lys13 contributes to the ATP binding site. Ser54, Asp141, and Asn153 together coordinate substrate. 173-174 (SD) contributes to the ATP binding site. Residues 278–355 (KGTVHLDSGA…NEIESVLGYP (78 aa)) enclose the PUA domain.

Belongs to the glutamate 5-kinase family.

Its subcellular location is the cytoplasm. The enzyme catalyses L-glutamate + ATP = L-glutamyl 5-phosphate + ADP. It functions in the pathway amino-acid biosynthesis; L-proline biosynthesis; L-glutamate 5-semialdehyde from L-glutamate: step 1/2. Catalyzes the transfer of a phosphate group to glutamate to form L-glutamate 5-phosphate. The sequence is that of Glutamate 5-kinase from Roseobacter denitrificans (strain ATCC 33942 / OCh 114) (Erythrobacter sp. (strain OCh 114)).